Consider the following 81-residue polypeptide: Protein Vpu (81 aa).

At 1-6 (MQPIQI) the chain is on the extracellular side. A helical membrane pass occupies residues 7–27 (AIVALVVAIIIAIVVWSIVII). The Cytoplasmic portion of the chain corresponds to 28 to 81 (EYRKILRQRKIDRLIDRLIERAEDSGNESEGEISALAEMGVEMGHHAPWDVDDL). Phosphoserine; by host CK2 is present on residues serine 52 and serine 56.

Belongs to the HIV-1 VPU protein family. Homopentamer. Interacts with host CD4 and BRTC; these interactions induce proteasomal degradation of CD4. Interacts with host BST2; this interaction leads to the degradation of host BST2. Interacts with host FBXW11. Interacts with host AP1M1; this interaction plays a role in the mistrafficking and subsequent degradation of host BST2. Interacts with host RANBP2; this interaction allows Vpu to down-regulate host BLM sumoylation. Phosphorylated by host CK2. This phosphorylation is necessary for interaction with human BTRC and degradation of CD4.

The protein resides in the host membrane. With respect to regulation, ion channel activity is inhibited by hexamethylene amiloride in vitro. In terms of biological role, enhances virion budding by targeting host CD4 and Tetherin/BST2 to proteasome degradation. Degradation of CD4 prevents any unwanted premature interactions between viral Env and its host receptor CD4 in the endoplasmic reticulum. Degradation of antiretroviral protein Tetherin/BST2 is important for virion budding, as BST2 tethers new viral particles to the host cell membrane. Mechanistically, Vpu bridges either CD4 or BST2 to BTRC, a substrate recognition subunit of the Skp1/Cullin/F-box protein E3 ubiquitin ligase, induces their ubiquitination and subsequent proteasomal degradation. The alteration of the E3 ligase specificity by Vpu seems to promote the degradation of host IKBKB, leading to NF-kappa-B down-regulation and subsequent apoptosis. Acts as a viroporin that forms an oligomeric ion channel in membranes. Modulates the host DNA repair mechanisms to promote degradation of nuclear viral cDNA in cells that are already productively infected in order to suppress immune sensing and proviral hyper-integration (superinfection). Manipulates PML-NBs and modulates SUMOylation of host BLM protein thereby enhancing its DNA-end processing activity toward viral unintegrated linear DNA. Also inhibits RAD52-mediated homologous repair of viral cDNA, preventing the generation of dead-end circular forms of single copies of the long terminal repeat and permitting sustained nucleolytic attack. The sequence is that of Protein Vpu from Homo sapiens (Human).